The following is a 132-amino-acid chain: Small ribosomal subunit protein uS8 (132 aa).

The protein belongs to the universal ribosomal protein uS8 family. In terms of assembly, part of the 30S ribosomal subunit. Contacts proteins S5 and S12.

In terms of biological role, one of the primary rRNA binding proteins, it binds directly to 16S rRNA central domain where it helps coordinate assembly of the platform of the 30S subunit. This chain is Small ribosomal subunit protein uS8, found in Borrelia duttonii (strain Ly).